Reading from the N-terminus, the 161-residue chain is 6,7-dimethyl-8-ribityllumazine synthase (161 aa).

Residues phenylalanine 23, serine 61–glutamate 63, and alanine 85–isoleucine 87 contribute to the 5-amino-6-(D-ribitylamino)uracil site. Residue aspartate 90 to threonine 91 participates in (2S)-2-hydroxy-3-oxobutyl phosphate binding. Histidine 93 functions as the Proton donor in the catalytic mechanism. Phenylalanine 118 contacts 5-amino-6-(D-ribitylamino)uracil. Position 132 (arginine 132) interacts with (2S)-2-hydroxy-3-oxobutyl phosphate.

It belongs to the DMRL synthase family.

It catalyses the reaction (2S)-2-hydroxy-3-oxobutyl phosphate + 5-amino-6-(D-ribitylamino)uracil = 6,7-dimethyl-8-(1-D-ribityl)lumazine + phosphate + 2 H2O + H(+). It functions in the pathway cofactor biosynthesis; riboflavin biosynthesis; riboflavin from 2-hydroxy-3-oxobutyl phosphate and 5-amino-6-(D-ribitylamino)uracil: step 1/2. In terms of biological role, catalyzes the formation of 6,7-dimethyl-8-ribityllumazine by condensation of 5-amino-6-(D-ribitylamino)uracil with 3,4-dihydroxy-2-butanone 4-phosphate. This is the penultimate step in the biosynthesis of riboflavin. The protein is 6,7-dimethyl-8-ribityllumazine synthase of Synechococcus sp. (strain WH7803).